A 390-amino-acid chain; its full sequence is Centrosomal protein of 44 kDa (390 aa).

The segment at 11–195 (RNLEQVLRLL…ISEDTLSPIT (185 aa)) is binds with microtubules and centrioles. A coiled-coil region spans residues 233 to 269 (EITALQTMLAECQENLKKLTSIEKRLDCLEQKMKGKV). The interval 322–348 (RKSEVERPASIPLSSGYSTASSDSTPR) is disordered. 2 positions are modified to phosphoserine: serine 331 and serine 345. Over residues 335-345 (SSGYSTASSDS) the composition is skewed to low complexity. Position 346 is a phosphothreonine (threonine 346). Positions 361–385 (SEETTIQKMERMKKMFEETAELLKC) form a coiled coil.

In terms of assembly, interacts with CROCC. Interacts with POC1B; the interaction is direct and recruits POC1B to centriolar microtubules. Binds to centriolar microtubules.

It localises to the cytoplasm. The protein localises to the cytoskeleton. It is found in the microtubule organizing center. Its subcellular location is the centrosome. The protein resides in the centriole. It localises to the spindle pole. The protein localises to the midbody. Functionally, centriole-enriched microtubule-binding protein involved in centriole biogenesis. In collaboration with CEP295 and POC1B, is required for the centriole-to-centrosome conversion by ensuring the formation of bona fide centriole wall. Functions as a linker component that maintains centrosome cohesion. Associates with CROCC and regulates its stability and localization to the centrosome. This Homo sapiens (Human) protein is Centrosomal protein of 44 kDa (CEP44).